Consider the following 115-residue polypeptide: Cycloviolacin-O13 (115 aa).

The N-terminal stretch at 1-22 is a signal peptide; the sequence is MDAKKMFVALVLIATFALPSLA. Positions 23–81 are excised as a propeptide; that stretch reads TFEKDFITPETIQAILKKSAPLSNIMLEEDVINALLKSKTVISNPIIEEAFLKNSNGLN. Positions 82–111 form a cross-link, cyclopeptide (Gly-Asn); the sequence is GIPCGESCVWIPCISAAIGCSCKSKVCYRN. 3 cysteine pairs are disulfide-bonded: Cys85-Cys101, Cys89-Cys103, and Cys94-Cys108. Residues 112–115 constitute a propeptide that is removed on maturation; it reads SLDN.

Post-translationally, cycloviolacin-O13 is a cyclic peptide. In terms of tissue distribution, expressed in leaves, petals, petioles, roots and runners (at protein level).

In terms of biological role, probably participates in a plant defense mechanism. Has hemolytic activity. The protein is Cycloviolacin-O13 of Viola odorata (Sweet violet).